Consider the following 1247-residue polypeptide: Lon protease homolog 2, peroxisomal (1247 aa).

Residues 22–402 enclose the Lon N-terminal domain; sequence LPTYTLDSNL…LINEMILQLI (381 aa). 3 disordered regions span residues 76 to 103, 447 to 503, and 626 to 655; these read SGNS…ETYH, TKNR…DVDD, and DQSD…SPTS. Over residues 459 to 477 the composition is skewed to low complexity; sequence PGPASSSGPSFSNGKSSPG. Positions 626–639 are enriched in basic and acidic residues; that stretch reads DQSDKSQPIKDNSK. Position 721 to 728 (721 to 728) interacts with ATP; that stretch reads GPPGTGKT. The 242-residue stretch at 989–1230 folds into the Lon proteolytic domain; that stretch reads TVGVGVVHGL…YDIIKIVWNE (242 aa). Active-site residues include S1099 and K1142.

The protein belongs to the peptidase S16 family.

The protein resides in the peroxisome matrix. The catalysed reaction is Hydrolysis of proteins in presence of ATP.. ATP-dependent serine protease that mediates the selective degradation of misfolded and unassembled polypeptides in the peroxisomal matrix. Necessary for type 2 peroxisome targeting signal (PTS2)-containing protein processing and facilitates peroxisome matrix protein import. The chain is Lon protease homolog 2, peroxisomal from Candida dubliniensis (strain CD36 / ATCC MYA-646 / CBS 7987 / NCPF 3949 / NRRL Y-17841) (Yeast).